Consider the following 256-residue polypeptide: uncharacterized protein (256 aa).

It belongs to the glycosyltransferase 2 family.

This is an uncharacterized protein from Acanthamoeba polyphaga mimivirus (APMV).